Here is a 278-residue protein sequence, read N- to C-terminus: Phosphatidylglycerol--prolipoprotein diacylglyceryl transferase (278 aa).

The next 3 helical transmembrane spans lie at 13–33, 50–70, and 89–109; these read LFGIPVYWYAIIIVSGIALAV, VFDFMLWGLPAAIVGARLYYV, and NGGLAIYGGLIGGGLALFFFT. R135 contributes to the a 1,2-diacyl-sn-glycero-3-phospho-(1'-sn-glycerol) binding site. The next 3 membrane-spanning stretches (helical) occupy residues 175–195, 205–225, and 236–256; these read QPTFLYESVWNVLGFIVLVLL, GEVFLGYIIWYSFGRFFIEGL, and IRVSQLLSLVMFVAAIVIVIV.

Belongs to the Lgt family.

It localises to the cell membrane. The enzyme catalyses L-cysteinyl-[prolipoprotein] + a 1,2-diacyl-sn-glycero-3-phospho-(1'-sn-glycerol) = an S-1,2-diacyl-sn-glyceryl-L-cysteinyl-[prolipoprotein] + sn-glycerol 1-phosphate + H(+). Its pathway is protein modification; lipoprotein biosynthesis (diacylglyceryl transfer). Catalyzes the transfer of the diacylglyceryl group from phosphatidylglycerol to the sulfhydryl group of the N-terminal cysteine of a prolipoprotein, the first step in the formation of mature lipoproteins. The polypeptide is Phosphatidylglycerol--prolipoprotein diacylglyceryl transferase (Enterococcus faecalis (strain ATCC 700802 / V583)).